Consider the following 422-residue polypeptide: Beclin-1-like protein (422 aa).

Residues 119–243 (MLEIMDRELR…KQQLDKLRDT (125 aa)) adopt a coiled-coil conformation. Residues 182-201 (QSLNDAIAEEEQEREELHEQ) are disordered.

It belongs to the beclin family. Interacts with Rab18, preferentially binding to the GTP-bound form.

Plays a central role in autophagy. This is Beclin-1-like protein from Drosophila melanogaster (Fruit fly).